Consider the following 634-residue polypeptide: MNPSAPSYPMASLYVGDLHPDVTEAMLYEKFSPAGPILSIRVCRDMMTRRSLGYAYVNFQQPADAERALDTMNFDVIKGRPVRIMWSQRDPSLRKSGVGNIFIKNLDKSIDNKALYDTFSAFGNILSCKVVCDENGSKGYGFVHFETHEAAERAIEKMNGMLLNDRKVFVGRFKSRKEREAEMGARAKEFTNVYIKNFGEDMDDEKLKEIFCKYGPALSIRVMTDDSGKSKGFGFVSFERHEDAQRAVDEMNGKEMNGKQVYVGRAQKKGERQTELKRKFEQMKQDRMTRYQGVNLYVKNLDDGLDDERLRKEFSPFGTITSAKVMMEGGRSKGFGFVCFSSPEEATKAVTEMNGRIVATKPLYVALAQRKEERQAHLTSQYMQRMASVRAVPNPVLNPYQPAPPSGYFMAAIPQAQNRAAYYPTSQLAQLRPSPRWATQGVRPQHFQNMPNAAVRPSAPRPQTFNPVRPASQVPRMMTSQRMGSQAMGPRPAAAGAATGPAQVRGVPQYKYAPGVRNPQQHMPTQPQVPMQQPAVHVQGQEPLTASMLAAAPPQEQKQMLGERLFPLIQNMHPSLAGKITGMLLEIDNSELLHMLESPESLRSKVDEAVAVLQAHQAKEAAQKSVPSPAVPAV.

RRM domains follow at residues 11-89, 99-175, 191-268, and 294-370; these read ASLY…WSQR, GNIF…RFKS, TNVY…RAQK, and VNLY…LAQR. The 78-residue stretch at 541-618 folds into the PABC domain; it reads QEPLTASMLA…AVAVLQAHQA (78 aa).

Belongs to the polyadenylate-binding protein type-1 family. In terms of assembly, interacts with ybx1; interaction recruits pabpc1a on C5-methylcytosine (m5C)-containing mRNAs, preventing their degradation.

It is found in the cytoplasm. Functionally, binds the poly(A) tail of mRNA. Prevents mRNA deadenylation and confers poly(A) stability. Binds to N6-methyladenosine (m6A)-containing mRNAs. Stimulates the translation of mRNAs to which it is bound, acting, at least in part, with dazl. Involved in the maternal-to-zygotic transition in early embryo via interaction with ybx1: interaction recruits pabpc1a on C5-methylcytosine (m5C)-containing maternal mRNAs, preventing their degradation. The polypeptide is Polyadenylate-binding protein 1A (Danio rerio (Zebrafish)).